The following is a 185-amino-acid chain: Ribosome-recycling factor (185 aa).

The protein belongs to the RRF family.

It localises to the cytoplasm. Responsible for the release of ribosomes from messenger RNA at the termination of protein biosynthesis. May increase the efficiency of translation by recycling ribosomes from one round of translation to another. The protein is Ribosome-recycling factor of Alkaliphilus oremlandii (strain OhILAs) (Clostridium oremlandii (strain OhILAs)).